The sequence spans 505 residues: MSQHVMFNAVLSSHPALFIQGEWRIGNGVSFEKQDPMSQQRLWQARAADHTDVTLACHAARAAFPAWARASLEQRATVIQQFAALLEQHKQSLARTISLETSKPYWETLTEVQAMIGKVAISLQAYQTRTGHSQTPMGDSMSVLRHRPHGVLAVFGPYNFPGHLPNGHIVPALLAGNTVVFKPSELTPWTAEETVKLWQQAGIPDGVLNLVQGGRETGEALAAQPDIDGLLFTGSAHTGYHLHRQLAGQPEKMLALEMGGNNALIVEQVKDRDAVVNLAIQSAFISAGQRCTCSRRLLVKTGAEGDAFLLRFTAVAQALRIGRWDEQPAPFMGAVISSQAAERMLAAQQHLLLLGGESLLNMTRPDSQSALLTPGIIDITNISEVPDEEYFGPLVSVIRYTDFTEALKIANQTRFGLAVGLVSEDRQQFEQLLLEARAGIVNWNKPLTGASSAAPFGGVGASGNHRPSAFYAADYCAWPMASLECEHLTLPATLSPGISFDLPKV.

234 to 239 (GSAHTG) provides a ligand contact to NAD(+). Catalysis depends on residues Glu257 and Cys291.

The protein belongs to the aldehyde dehydrogenase family. AstD subfamily.

The catalysed reaction is N-succinyl-L-glutamate 5-semialdehyde + NAD(+) + H2O = N-succinyl-L-glutamate + NADH + 2 H(+). It functions in the pathway amino-acid degradation; L-arginine degradation via AST pathway; L-glutamate and succinate from L-arginine: step 4/5. Catalyzes the NAD-dependent reduction of succinylglutamate semialdehyde into succinylglutamate. In Yersinia pestis bv. Antiqua (strain Antiqua), this protein is N-succinylglutamate 5-semialdehyde dehydrogenase.